A 190-amino-acid chain; its full sequence is Nucleoside triphosphate pyrophosphatase (190 aa).

Asp-69 serves as the catalytic Proton acceptor.

This sequence belongs to the Maf family. A divalent metal cation is required as a cofactor.

It is found in the cytoplasm. It catalyses the reaction a ribonucleoside 5'-triphosphate + H2O = a ribonucleoside 5'-phosphate + diphosphate + H(+). The catalysed reaction is a 2'-deoxyribonucleoside 5'-triphosphate + H2O = a 2'-deoxyribonucleoside 5'-phosphate + diphosphate + H(+). Nucleoside triphosphate pyrophosphatase. May have a dual role in cell division arrest and in preventing the incorporation of modified nucleotides into cellular nucleic acids. The protein is Nucleoside triphosphate pyrophosphatase of Helicobacter pylori (strain G27).